A 544-amino-acid chain; its full sequence is Rubrofusarin-specific efflux pump aurT (544 aa).

The span at 1–12 (MTDNTDMEKLDR) shows a compositional bias: basic and acidic residues. The interval 1 to 42 (MTDNTDMEKLDRATTPTPIPNEAPPTSEPSESKPEEAEDESK) is disordered. The span at 17–27 (TPIPNEAPPTS) shows a compositional bias: pro residues. Positions 30-42 (SESKPEEAEDESK) are enriched in basic and acidic residues. 8 helical membrane-spanning segments follow: residues 45–65 (HGLKLAAIILSNMVAMFLVAL), 89–111 (WYASAYLITSSATQLLWGRIFTF), 116–136 (TVYLVAIFFFELGSLLCGVAP), 146–166 (AIAGAGSAGIYSGSTILITTV), 177–197 (GMMGAVFGIASVIAPLIGGAF), 205–225 (WCFYINLPVGGAAVACLILLF), 246–266 (WGNLVFLPGVICLILALQWGG), and 276–296 (IVALLVLACVLLLVFIGIQIW). N300 carries an N-linked (GlcNAc...) asparagine glycan. 6 consecutive transmembrane segments (helical) span residues 318–338 (IFAFCLGSVLIVFLIALPIWF), 357–377 (VLSLVFGAIVSGGVINGVGWF), 380–400 (VFFSSVIFMSVGGGLITTFVV), 407–427 (WIGYQIILGLGIGQGMQLASL), 444–464 (LMFFAQSLGGSVLVCVAQAVF), and 514–534 (YFYVGLAAACFAVLPSLGIEW).

Belongs to the major facilitator superfamily. TCR/Tet family.

The protein resides in the cell membrane. It participates in pigment biosynthesis. In terms of biological role, rubrofusarin-specific efflux pump; part of the gene cluster that mediates the biosynthesis of aurofusarin, a red mycelium pigment which is acting as a mycotoxin. The first step is performed by the polyketide synthase which condenses one acetyl-CoA and 6 malonyl-CoA units to form the first intermediate, the cyclic heptaketide and yellow pigment YWA1. The C2 hydroxyl group in the pyrone ring of YWA1 is probably formed during ring closure by an aldol-type cyclization reaction. The dehydratase aurZ then acts as the first tailoring enzyme in the aurofusarin biosynthetic pathway by converting YWA1 to nor-rubrofusarin. Nor-rubrofusarin is then methylated to rubrofusarin by the O-methyltransferase aurJ. Rubrofusarin is then transported across the plasma membrane by the rubrofusarin-specific pump aurT for further enzymatic processing by the extracellular complex composed of GIP1, aurF, aurO and aurS to yield aurofusarin. The sequence is that of Rubrofusarin-specific efflux pump aurT from Gibberella zeae (strain ATCC MYA-4620 / CBS 123657 / FGSC 9075 / NRRL 31084 / PH-1) (Wheat head blight fungus).